Reading from the N-terminus, the 751-residue chain is Photosystem I P700 chlorophyll a apoprotein A1 (751 aa).

8 helical membrane passes run 73–96 (VFSA…FHGA), 159–182 (LYTT…FHYH), 198–222 (LNHH…HVSL), 294–312 (TVHH…GHQY), 349–372 (WHAQ…HHMY), 388–414 (LSLF…IFMV), 436–458 (AMIS…LYIH), and 533–551 (FMVH…LILL). Positions 575 and 584 each coordinate [4Fe-4S] cluster. Helical transmembrane passes span 591–612 (HVFL…HFSW) and 665–687 (LSAY…MFLF). Histidine 676 lines the chlorophyll a' pocket. Chlorophyll a-binding residues include methionine 684 and tyrosine 692. Tryptophan 693 serves as a coordination point for phylloquinone. A helical transmembrane segment spans residues 725–745 (AVGVAHYLLGGIATTWSFFLA).

This sequence belongs to the PsaA/PsaB family. As to quaternary structure, the PsaA/B heterodimer binds the P700 chlorophyll special pair and subsequent electron acceptors. PSI consists of a core antenna complex that captures photons, and an electron transfer chain that converts photonic excitation into a charge separation. The eukaryotic PSI reaction center is composed of at least 11 subunits. Requires P700 is a chlorophyll a/chlorophyll a' dimer, A0 is one or more chlorophyll a, A1 is one or both phylloquinones and FX is a shared 4Fe-4S iron-sulfur center. as cofactor.

It is found in the plastid. The protein resides in the chloroplast thylakoid membrane. It catalyses the reaction reduced [plastocyanin] + hnu + oxidized [2Fe-2S]-[ferredoxin] = oxidized [plastocyanin] + reduced [2Fe-2S]-[ferredoxin]. Functionally, psaA and PsaB bind P700, the primary electron donor of photosystem I (PSI), as well as the electron acceptors A0, A1 and FX. PSI is a plastocyanin/cytochrome c6-ferredoxin oxidoreductase, converting photonic excitation into a charge separation, which transfers an electron from the donor P700 chlorophyll pair to the spectroscopically characterized acceptors A0, A1, FX, FA and FB in turn. Oxidized P700 is reduced on the lumenal side of the thylakoid membrane by plastocyanin or cytochrome c6. The chain is Photosystem I P700 chlorophyll a apoprotein A1 from Chlorella vulgaris (Green alga).